A 239-amino-acid chain; its full sequence is Leucine rich adaptor protein 1 (239 aa).

LRR repeat units follow at residues 55-83 and 93-114; these read LGDK…LVTL and LLEE…QYSL. The segment covering 107–118 has biased composition (low complexity); sequence LTSSQYSLTGGS. Positions 107 to 140 are disordered; that stretch reads LTSSQYSLTGGSPERSRRGSWDSLPDTSSTDRLD. Phosphoserine occurs at positions 118, 126, and 129.

As to quaternary structure, forms a tripartite complex with CDC42BPA/CDC42BPB and MYO18A acting as an adapter connecting both. Its binding to CDC42BPA/CDC42BPB results in their activation by abolition of their negative autoregulation. Interacts with CDC42BPA and CDC42BPB. Post-translationally, phosphorylated.

The protein resides in the cytoplasm. Acts as an activator of the canonical NF-kappa-B pathway and drive the production of pro-inflammatory cytokines. Promotes the antigen (Ag)-presenting and priming function of dendritic cells via the canonical NF-kappa-B pathway. In concert with MYO18A and CDC42BPA/CDC42BPB, is involved in modulating lamellar actomyosin retrograde flow that is crucial to cell protrusion and migration. Activates CDC42BPA/CDC42BPB and targets it to actomyosin through its interaction with MYO18A, leading to MYL9/MLC2 phosphorylation and MYH9/MYH10-dependent actomyosin assembly in the lamella. This chain is Leucine rich adaptor protein 1 (Lurap1), found in Rattus norvegicus (Rat).